A 212-amino-acid chain; its full sequence is U8 snoRNA-decapping enzyme (212 aa).

Residues 1 to 23 (MAESRSPDRGAKEDKPRPRNISR) form a disordered region. Substrate-binding residues include His37, Arg63, and Phe70. Residues 39–187 (LLHAPSQAKL…IGNSKSQLLY (149 aa)) form the Nudix hydrolase domain. Mn(2+) contacts are provided by Gly72, Glu89, Glu93, and Glu150. The Nudix box motif lies at 74–95 (FVDTRDISLEEGLKRELEEELG). 2 residues coordinate substrate: Asn180 and Gln184.

This sequence belongs to the Nudix hydrolase family. NUDT16 subfamily. In terms of assembly, homodimer. Mg(2+) serves as cofactor. The cofactor is Mn(2+). Co(2+) is required as a cofactor. Detected in ovary, and at very low levels in epithelial cells (at protein level).

It localises to the nucleus. It is found in the nucleolus. The protein localises to the nucleoplasm. The protein resides in the cytoplasm. The catalysed reaction is a 5'-end (N(7)-methyl 5'-triphosphoguanosine)-ribonucleoside in mRNA + H2O = N(7)-methyl-GDP + a 5'-end phospho-ribonucleoside in mRNA + 2 H(+). The enzyme catalyses IDP + H2O = IMP + phosphate + H(+). It carries out the reaction dIDP + H2O = dIMP + phosphate + H(+). It catalyses the reaction a 5'-end NAD(+)-phospho-ribonucleoside in mRNA + H2O = a 5'-end phospho-ribonucleoside in mRNA + NAD(+) + H(+). The catalysed reaction is a 5'-end FAD-phospho-ribonucleoside in mRNA + H2O = a 5'-end phospho-adenosine-phospho-ribonucleoside in mRNA + FMN + 2 H(+). The enzyme catalyses a 5'-end CoA-ribonucleoside in mRNA + H2O = a 5'-end phospho-adenosine-phospho-ribonucleoside in mRNA + (R)-4'-phosphopantetheine + 2 H(+). Its function is as follows. RNA-binding and decapping enzyme that catalyzes the cleavage of the cap structure of snoRNAs and mRNAs in a metal-dependent manner. Part of the U8 snoRNP complex that is required for the accumulation of mature 5.8S and 28S rRNA. Has diphosphatase activity and removes m7G and/or m227G caps from U8 snoRNA and leaves a 5'monophosphate on the RNA. Also catalyzes the cleavage of the cap structure on mRNAs. Does not hydrolyze cap analog structures like 7-methylguanosine nucleoside triphosphate (m7GpppG). Also hydrolysis m7G- and m227G U3-capped RNAs but with less efficiencies. Has broad substrate specificity with manganese or cobalt as cofactor and can act on various RNA species. Binds to the U8 snoRNA; metal is not required for RNA-binding. May play a role in the regulation of snoRNAs and mRNAs degradation. Also acts as a phosphatase; hydrolyzes the non-canonical purine nucleotides inosine diphosphate (IDP) and deoxyinosine diphosphate (dITP) as well as guanosine diphosphate (GDP), deoxyguanosine diphosphate (dGDP), xanthine diphosphate (XDP), inosine triphosphate (ITP) and deoxyinosine triphosphate (ITP) to their respective monophosphate derivatives and does not distinguish between the deoxy- and ribose forms. The order of activity with different substrates is IDP &gt; dIDP &gt;&gt; GDP = dGDP &gt; XDP = ITP = dITP. Binds strongly to GTP, ITP and XTP. Participates in the hydrolysis of dIDP/IDP and probably excludes non-canonical purines from RNA and DNA precursor pools, thus preventing their incorporation into RNA and DNA and avoiding chromosomal lesions. Exhibits decapping activity towards NAD-capped RNAs and FAD-capped RNAs. Exhibits decapping activity towards dpCoA-capped RNAs in vitro. The polypeptide is U8 snoRNA-decapping enzyme (nudt16) (Xenopus laevis (African clawed frog)).